Here is a 235-residue protein sequence, read N- to C-terminus: tRNA pseudouridine synthase B (235 aa).

The Nucleophile role is filled by Asp-45.

This sequence belongs to the pseudouridine synthase TruB family. Type 1 subfamily.

The enzyme catalyses uridine(55) in tRNA = pseudouridine(55) in tRNA. In terms of biological role, responsible for synthesis of pseudouridine from uracil-55 in the psi GC loop of transfer RNAs. This is tRNA pseudouridine synthase B from Chlamydia pneumoniae (Chlamydophila pneumoniae).